The chain runs to 279 residues: Pantothenate synthetase (279 aa).

Met26–His33 provides a ligand contact to ATP. His33 (proton donor) is an active-site residue. Gln57 serves as a coordination point for (R)-pantoate. Gln57 lines the beta-alanine pocket. Gly143–Asp146 serves as a coordination point for ATP. Gln149 contacts (R)-pantoate. Residues Val172 and Leu180–Arg183 each bind ATP.

It belongs to the pantothenate synthetase family. In terms of assembly, homodimer.

The protein resides in the cytoplasm. The catalysed reaction is (R)-pantoate + beta-alanine + ATP = (R)-pantothenate + AMP + diphosphate + H(+). It functions in the pathway cofactor biosynthesis; (R)-pantothenate biosynthesis; (R)-pantothenate from (R)-pantoate and beta-alanine: step 1/1. Its function is as follows. Catalyzes the condensation of pantoate with beta-alanine in an ATP-dependent reaction via a pantoyl-adenylate intermediate. This chain is Pantothenate synthetase, found in Nitrosospira multiformis (strain ATCC 25196 / NCIMB 11849 / C 71).